A 134-amino-acid polypeptide reads, in one-letter code: Small ribosomal subunit protein uS9 (134 aa).

The interval 109–134 (KGDPRRKEPKKFGGRGARARRQKSYR) is disordered. Residues 115–134 (KEPKKFGGRGARARRQKSYR) show a composition bias toward basic residues.

It belongs to the universal ribosomal protein uS9 family.

This chain is Small ribosomal subunit protein uS9, found in Methanopyrus kandleri (strain AV19 / DSM 6324 / JCM 9639 / NBRC 100938).